Reading from the N-terminus, the 322-residue chain is Acetyl-coenzyme A carboxylase carboxyl transferase subunit alpha (322 aa).

Residues Arg39–Gln293 enclose the CoA carboxyltransferase C-terminal domain.

The protein belongs to the AccA family. As to quaternary structure, acetyl-CoA carboxylase is a heterohexamer composed of biotin carboxyl carrier protein (AccB), biotin carboxylase (AccC) and two subunits each of ACCase subunit alpha (AccA) and ACCase subunit beta (AccD).

It localises to the cytoplasm. It catalyses the reaction N(6)-carboxybiotinyl-L-lysyl-[protein] + acetyl-CoA = N(6)-biotinyl-L-lysyl-[protein] + malonyl-CoA. Its pathway is lipid metabolism; malonyl-CoA biosynthesis; malonyl-CoA from acetyl-CoA: step 1/1. Its function is as follows. Component of the acetyl coenzyme A carboxylase (ACC) complex. First, biotin carboxylase catalyzes the carboxylation of biotin on its carrier protein (BCCP) and then the CO(2) group is transferred by the carboxyltransferase to acetyl-CoA to form malonyl-CoA. This is Acetyl-coenzyme A carboxylase carboxyl transferase subunit alpha from Ralstonia pickettii (strain 12J).